A 640-amino-acid polypeptide reads, in one-letter code: Ribonuclease J (640 aa).

Residues His75, His77, Asp79, His80, His145, and Asp167 each coordinate Zn(2+). 368 to 372 is a binding site for substrate; it reads HVSGH. His394 contacts Zn(2+). The segment at 578–640 is disordered; the sequence is TVSATSATPA…RKRSTTSVSS (63 aa). A compositionally biased stretch (basic and acidic residues) spans 598–610; that stretch reads PEPKVKAKPEKKV.

This sequence belongs to the metallo-beta-lactamase superfamily. RNA-metabolizing metallo-beta-lactamase-like family. Bacterial RNase J subfamily. In terms of assembly, homodimer, may be a subunit of the RNA degradosome. Zn(2+) serves as cofactor.

The protein resides in the cytoplasm. In terms of biological role, an RNase that has 5'-3' exonuclease and possibly endoonuclease activity. Involved in maturation of rRNA and in some organisms also mRNA maturation and/or decay. The polypeptide is Ribonuclease J (Synechocystis sp. (strain ATCC 27184 / PCC 6803 / Kazusa)).